Reading from the N-terminus, the 687-residue chain is E3 ubiquitin-protein ligase RNF19B (687 aa).

Residues 1 to 294 form a required for ubiquitin ligase activity and for protection against staurosporin-induced cell death region; the sequence is MRLRNDCLVR…VCGCEFCWLC (294 aa). Residues 53–88 form a disordered region; sequence RTRAAPEPSVPSPPPSPPPPPPPPVSVPPPPSSPGG. Residues 60–85 are compositionally biased toward pro residues; the sequence is PSVPSPPPSPPPPPPPPVSVPPPPSS. The segment at 91-313 is TRIAD supradomain; the sequence is SLIECPLCLV…LSPSGCTFWG (223 aa). Cysteine 95, cysteine 98, cysteine 118, cysteine 121, cysteine 182, cysteine 187, cysteine 204, cysteine 209, cysteine 214, cysteine 217, histidine 222, cysteine 227, cysteine 263, and cysteine 266 together coordinate Zn(2+). Residues 95 to 144 form an RING-type 1 zinc finger; the sequence is CPLCLVRQPPEEIPELLSCRHRSCLRCLRQYLRIEICESRVNLRCPECAE. An IBR-type zinc finger spans residues 161–227; the sequence is TRKYEEFLLR…KHVWHPNQTC (67 aa). Residues 263-294 form an RING-type 2; atypical zinc finger; that stretch reads CPRCSAYIIKMNDGSCNHMTCSVCGCEFCWLC. Residue cysteine 278 is part of the active site. 6 residues coordinate Zn(2+): cysteine 283, cysteine 286, cysteine 291, cysteine 294, histidine 302, and cysteine 309. 2 helical membrane-spanning segments follow: residues 330-350 and 391-411; these read LIGA…AMVI and VVAA…VYGV. Residues 618-662 are disordered; that stretch reads SIRSDLESSDAQSDDVPDLASEEYDSPHLFPPSPSNALQESPPHR. The span at 629 to 641 shows a compositional bias: acidic residues; the sequence is QSDDVPDLASEEY.

Belongs to the RBR family. RNF19 subfamily. In terms of assembly, interacts with UBE2L3, UBE2L6 and UCKL1.

It localises to the cytoplasmic granule membrane. Its subcellular location is the endoplasmic reticulum membrane. It catalyses the reaction [E2 ubiquitin-conjugating enzyme]-S-ubiquitinyl-L-cysteine + [acceptor protein]-L-lysine = [E2 ubiquitin-conjugating enzyme]-L-cysteine + [acceptor protein]-N(6)-ubiquitinyl-L-lysine.. The protein operates within protein modification; protein ubiquitination. E3 ubiquitin-protein ligase which accepts ubiquitin from E2 ubiquitin-conjugating enzymes UBE2L3 and UBE2L6 in the form of a thioester and then directly transfers the ubiquitin to targeted substrates, such as UCKL1. Involved in the cytolytic activity of natural killer cells and cytotoxic T-cells. Protects against staurosporin-induced cell death. This Xenopus laevis (African clawed frog) protein is E3 ubiquitin-protein ligase RNF19B (rnf19b).